The following is a 65-amino-acid chain: Large ribosomal subunit protein bL31 (65 aa).

Residues C16, C18, C36, and C39 each contribute to the Zn(2+) site.

This sequence belongs to the bacterial ribosomal protein bL31 family. Type A subfamily. Part of the 50S ribosomal subunit. The cofactor is Zn(2+).

Functionally, binds the 23S rRNA. This is Large ribosomal subunit protein bL31 from Carboxydothermus hydrogenoformans (strain ATCC BAA-161 / DSM 6008 / Z-2901).